Consider the following 190-residue polypeptide: MPPIKENVIIYANPDHCLSCHSCELACAVAHSGGHDMIEAIAANLPLHARNKVVSVDGTAMPMQCRQCEDAPCTFACPTGACRQADGQVQIVEQHCIGCKLCVMVCPFGAITVRSETVVEQGACTNRGVAKKCDLCVDWRASTGKTAPACVEACPTKAIRMVDLDAYRIALREARAREIAKSHRHMRVQF.

Residues 8-36 (VIIYANPDHCLSCHSCELACAVAHSGGHD) enclose the 4Fe-4S ferredoxin-type 1 domain. The [4Fe-4S] cluster site is built by Cys17, Cys20, Cys23, Cys27, Cys65, Cys68, Cys73, Cys77, Cys96, Cys99, Cys102, Cys106, Cys133, Cys136, Cys150, and Cys154. 4Fe-4S ferredoxin-type domains follow at residues 87 to 116 (GQVQ…VRSE) and 133 to 164 (CDLC…MVDL).

Functionally, the carbon monoxide dehydrogenase (CODH) oxidizes carbon monoxide coupled, via CooF, to the reduction of a hydrogen cation by a hydrogenase (probably CooH). CooF is required in stoichiometric amounts in vitro for anchoring CODH to the membrane as well as for conveying the electrons to the hydrogenase. The sequence is that of Iron-sulfur protein (cooF) from Rhodospirillum rubrum.